A 100-amino-acid chain; its full sequence is Urease subunit gamma (100 aa).

It belongs to the urease gamma subunit family. In terms of assembly, heterotrimer of UreA (gamma), UreB (beta) and UreC (alpha) subunits. Three heterotrimers associate to form the active enzyme.

It localises to the cytoplasm. The enzyme catalyses urea + 2 H2O + H(+) = hydrogencarbonate + 2 NH4(+). It functions in the pathway nitrogen metabolism; urea degradation; CO(2) and NH(3) from urea (urease route): step 1/1. This Prochlorococcus marinus (strain MIT 9301) protein is Urease subunit gamma.